Reading from the N-terminus, the 154-residue chain is Iron-sulfur cluster assembly enzyme IscU (154 aa).

The protein belongs to the NifU family. As to quaternary structure, component of the mitochondrial core iron-sulfur cluster (ISC) assembly complex at least composed of the cystein desulfurase Nfs1, the scaffold protein IscU, the accessory protein bcn92/Isd11/Lyrm4, and probably fh/frataxin. Interacts with Nfs1. Fe(2+) serves as cofactor. [2Fe-2S] cluster is required as a cofactor.

Its pathway is cofactor biosynthesis; iron-sulfur cluster biosynthesis. Scaffold protein for the de novo synthesis of iron-sulfur (Fe-S) clusters within mitochondria, which is required for maturation of both mitochondrial and cytoplasmic [2Fe-2S] and [4Fe-4S] proteins. Component of the mitochondrial core iron-sulfur cluster (ISC) assembly complex; regulates its activity. The chain is Iron-sulfur cluster assembly enzyme IscU from Drosophila melanogaster (Fruit fly).